The sequence spans 669 residues: Alpha-1,4-glucan:maltose-1-phosphate maltosyltransferase 2 (669 aa).

Alpha-maltose 1-phosphate contacts are provided by lysine 255, glutamine 315, and aspartate 350. Aspartate 385 functions as the Nucleophile in the catalytic mechanism. Asparagine 386 is an alpha-maltose 1-phosphate binding site. The active-site Proton donor is glutamate 414. Lysine 525–tyrosine 526 is an alpha-maltose 1-phosphate binding site.

It belongs to the glycosyl hydrolase 13 family. GlgE subfamily. In terms of assembly, homodimer.

The catalysed reaction is alpha-maltose 1-phosphate + [(1-&gt;4)-alpha-D-glucosyl](n) = [(1-&gt;4)-alpha-D-glucosyl](n+2) + phosphate. In terms of biological role, maltosyltransferase that uses maltose 1-phosphate (M1P) as the sugar donor to elongate linear or branched alpha-(1-&gt;4)-glucans. Maltooligosaccharides with a degree of polymerization (DP) superior or equal to 4 are efficient acceptors, with DP6 being optimal in the GlgE-catalyzed polymerization with M1P. Is probably involved in a branched alpha-glucan biosynthetic pathway from trehalose, together with TreS, Mak and GlgB. This is Alpha-1,4-glucan:maltose-1-phosphate maltosyltransferase 2 (glgE2) from Streptomyces coelicolor (strain ATCC BAA-471 / A3(2) / M145).